The primary structure comprises 1234 residues: DNA-directed RNA polymerase subunit beta (1234 aa).

Positions 1189 to 1212 (VLSSQDNDYEEPEENDEEDELNLD) are disordered. Residues 1195–1212 (NDYEEPEENDEEDELNLD) are compositionally biased toward acidic residues.

It belongs to the RNA polymerase beta chain family. As to quaternary structure, the RNAP catalytic core consists of 2 alpha, 1 beta, 1 beta' and 1 omega subunit. When a sigma factor is associated with the core the holoenzyme is formed, which can initiate transcription.

It carries out the reaction RNA(n) + a ribonucleoside 5'-triphosphate = RNA(n+1) + diphosphate. Its function is as follows. DNA-dependent RNA polymerase catalyzes the transcription of DNA into RNA using the four ribonucleoside triphosphates as substrates. This chain is DNA-directed RNA polymerase subunit beta, found in Clostridium kluyveri (strain NBRC 12016).